The following is a 727-amino-acid chain: Non-structural protein 4 (727 aa).

Disordered regions lie at residues 1-38 (MNQSRSFVTGRGRDLSRTPSALSSNSETPGSMSSPSEG) and 671-727 (GNSM…KLSK). Residues 17-38 (RTPSALSSNSETPGSMSSPSEG) show a composition bias toward polar residues. Residues 712 to 727 (SRRKARKARAASKLSK) are compositionally biased toward basic residues.

This chain is Non-structural protein 4, found in Rice dwarf virus (isolate Fujian) (RDV).